The following is a 331-amino-acid chain: tRNA-cytidine(32) 2-sulfurtransferase (331 aa).

The PP-loop motif signature appears at 71–76 (SGGKDS). [4Fe-4S] cluster-binding residues include Cys146, Cys149, and Cys237.

It belongs to the TtcA family. As to quaternary structure, homodimer. The cofactor is Mg(2+). [4Fe-4S] cluster serves as cofactor.

The protein resides in the cytoplasm. It catalyses the reaction cytidine(32) in tRNA + S-sulfanyl-L-cysteinyl-[cysteine desulfurase] + AH2 + ATP = 2-thiocytidine(32) in tRNA + L-cysteinyl-[cysteine desulfurase] + A + AMP + diphosphate + H(+). It participates in tRNA modification. Catalyzes the ATP-dependent 2-thiolation of cytidine in position 32 of tRNA, to form 2-thiocytidine (s(2)C32). The sulfur atoms are provided by the cysteine/cysteine desulfurase (IscS) system. This chain is tRNA-cytidine(32) 2-sulfurtransferase, found in Burkholderia multivorans (strain ATCC 17616 / 249).